Consider the following 307-residue polypeptide: Transcription initiation factor IIB 2 (307 aa).

Residues 7-38 form a TFIIB-type zinc finger; sequence TPKRCPECNSEHLIRDYEHGELICADCGAVIE. 4 residues coordinate Zn(2+): Cys-11, Cys-14, Cys-30, and Cys-33. Repeat copies occupy residues 124-207 and 218-299.

Belongs to the TFIIB family.

Its function is as follows. Stabilizes TBP binding to an archaeal box-A promoter. Also responsible for recruiting RNA polymerase II to the pre-initiation complex (DNA-TBP-TFIIB). This Thermoplasma acidophilum (strain ATCC 25905 / DSM 1728 / JCM 9062 / NBRC 15155 / AMRC-C165) protein is Transcription initiation factor IIB 2.